A 478-amino-acid chain; its full sequence is Glycogen synthase (478 aa).

ADP-alpha-D-glucose is bound at residue Lys-20.

This sequence belongs to the glycosyltransferase 1 family. Bacterial/plant glycogen synthase subfamily.

The catalysed reaction is [(1-&gt;4)-alpha-D-glucosyl](n) + ADP-alpha-D-glucose = [(1-&gt;4)-alpha-D-glucosyl](n+1) + ADP + H(+). Its pathway is glycan biosynthesis; glycogen biosynthesis. In terms of biological role, synthesizes alpha-1,4-glucan chains using ADP-glucose. In Cereibacter sphaeroides (strain ATCC 17023 / DSM 158 / JCM 6121 / CCUG 31486 / LMG 2827 / NBRC 12203 / NCIMB 8253 / ATH 2.4.1.) (Rhodobacter sphaeroides), this protein is Glycogen synthase.